A 345-amino-acid polypeptide reads, in one-letter code: MAASGKLGTFRLPPLPTIREIIKLFGLRAVKQLSQNFLLDLRLTDKIVRKAGSLADVYVYEVGPGPGGITRSILNANVAELLVVEKDTRFIPGLQMLSDAAPGKLRIVHGDVLTYKIEKAFPGNIRRQWEDDPPNVHIIGNLPFSVSTPLIIKWLENISLKDGPFVYGRTKMTLTFQKEVAERLVATTGSKQHSRLSIMAQYLCNVEHLFTIPGKAFVPKPKVDVGVVHLTPLIEPKIKQPFKLVEKVVQNAFQFRRKYCHRGLGMLFPEAQRLESTGRLLQLADIDPTLRPTHLSLMHFKSLCDVYRKMCDEDPQLFTYNFREELKQKKSKGQEKDGDPESCGF.

The N-terminal 27 residues, 1–27, are a transit peptide targeting the mitochondrion; that stretch reads MAASGKLGTFRLPPLPTIREIIKLFGL. Residues L38, G63, E85, K86, D111, V112, and N141 each coordinate S-adenosyl-L-methionine.

This sequence belongs to the class I-like SAM-binding methyltransferase superfamily. rRNA adenine N(6)-methyltransferase family. KsgA subfamily. As to quaternary structure, interacts with mitochondrial RNA polymerase POLRMT. Interacts with TFAM. Remains bound to the maturing mtSSU until the late stages of assembly. In terms of tissue distribution, ubiquitously expressed.

The protein localises to the mitochondrion. It carries out the reaction adenosine(N)/adenosine(N+1) in rRNA + 4 S-adenosyl-L-methionine = N(6)-dimethyladenosine(N)/N(6)-dimethyladenosine(N+1) in rRNA + 4 S-adenosyl-L-homocysteine + 4 H(+). Its function is as follows. Mitochondrial methyltransferase which uses S-adenosyl methionine to dimethylate two highly conserved adjacent adenosine residues (A1006 and A1007) within the loop of helix 45 at the 3-prime end of 12S rRNA, thereby regulating the assembly or stability of the small subunit of the mitochondrial ribosome. Also required for basal transcription of mitochondrial DNA, probably via its interaction with POLRMT and TFAM. Stimulates transcription independently of the methyltransferase activity. The sequence is that of Dimethyladenosine transferase 1, mitochondrial (Tfb1m) from Mus musculus (Mouse).